Consider the following 163-residue polypeptide: Phosphopantetheine adenylyltransferase (163 aa).

Threonine 11 serves as a coordination point for substrate. ATP-binding positions include 11-12 (TF) and histidine 19. Residues lysine 43, leucine 75, and arginine 89 each contribute to the substrate site. Residues 90–92 (GLR), glutamate 100, and 125–131 (YSFISST) each bind ATP.

This sequence belongs to the bacterial CoaD family. As to quaternary structure, homohexamer. Mg(2+) serves as cofactor.

It localises to the cytoplasm. It catalyses the reaction (R)-4'-phosphopantetheine + ATP + H(+) = 3'-dephospho-CoA + diphosphate. It functions in the pathway cofactor biosynthesis; coenzyme A biosynthesis; CoA from (R)-pantothenate: step 4/5. Functionally, reversibly transfers an adenylyl group from ATP to 4'-phosphopantetheine, yielding dephospho-CoA (dPCoA) and pyrophosphate. This is Phosphopantetheine adenylyltransferase from Acinetobacter baumannii (strain SDF).